We begin with the raw amino-acid sequence, 562 residues long: Sulfite reductase [NADPH] hemoprotein beta-component (562 aa).

Residues C425, C431, C470, and C474 each contribute to the [4Fe-4S] cluster site. A siroheme-binding site is contributed by C474.

It belongs to the nitrite and sulfite reductase 4Fe-4S domain family. As to quaternary structure, alpha(8)-beta(8). The alpha component is a flavoprotein, the beta component is a hemoprotein. Requires siroheme as cofactor. It depends on [4Fe-4S] cluster as a cofactor.

It catalyses the reaction hydrogen sulfide + 3 NADP(+) + 3 H2O = sulfite + 3 NADPH + 4 H(+). Its pathway is sulfur metabolism; hydrogen sulfide biosynthesis; hydrogen sulfide from sulfite (NADPH route): step 1/1. Its function is as follows. Component of the sulfite reductase complex that catalyzes the 6-electron reduction of sulfite to sulfide. This is one of several activities required for the biosynthesis of L-cysteine from sulfate. This chain is Sulfite reductase [NADPH] hemoprotein beta-component, found in Tolumonas auensis (strain DSM 9187 / NBRC 110442 / TA 4).